We begin with the raw amino-acid sequence, 489 residues long: Betaine aldehyde dehydrogenase (489 aa).

Residues T26 and D93 each coordinate K(+). 150–152 (GAW) provides a ligand contact to NAD(+). Residue K162 is the Charge relay system of the active site. 176–179 (KPSE) serves as a coordination point for NAD(+). Residue V180 coordinates K(+). NAD(+) is bound at residue 229 to 232 (GVET). Residue L245 participates in K(+) binding. E251 functions as the Proton acceptor in the catalytic mechanism. Positions 253, 285, and 386 each coordinate NAD(+). The Nucleophile role is filled by C285. C285 is subject to Cysteine sulfenic acid (-SOH). K456 and G459 together coordinate K(+). The active-site Charge relay system is E463.

Belongs to the aldehyde dehydrogenase family. As to quaternary structure, dimer of dimers. K(+) serves as cofactor.

The enzyme catalyses betaine aldehyde + NAD(+) + H2O = glycine betaine + NADH + 2 H(+). Its pathway is amine and polyamine biosynthesis; betaine biosynthesis via choline pathway; betaine from betaine aldehyde: step 1/1. Its function is as follows. Involved in the biosynthesis of the osmoprotectant glycine betaine. Catalyzes the irreversible oxidation of betaine aldehyde to the corresponding acid. This chain is Betaine aldehyde dehydrogenase, found in Burkholderia pseudomallei (strain 1106a).